The primary structure comprises 235 residues: Probable GTP-binding protein EngB (235 aa).

The EngB-type G domain maps to 23-219; the sequence is QVPEIAFAGR…NDKIIELLGL (197 aa). GTP is bound by residues 31–38, 58–62, 92–95, 159–162, and 193–200; these read GRSNAGKS, GRTQH, DLPG, TKSD, and FTAQMFSA. Residues Ser38 and Thr60 each coordinate Mg(2+).

It belongs to the TRAFAC class TrmE-Era-EngA-EngB-Septin-like GTPase superfamily. EngB GTPase family. Mg(2+) is required as a cofactor.

Necessary for normal cell division and for the maintenance of normal septation. This is Probable GTP-binding protein EngB from Janthinobacterium sp. (strain Marseille) (Minibacterium massiliensis).